Here is a 1437-residue protein sequence, read N- to C-terminus: FYVE and coiled-coil domain-containing protein 1 (1437 aa).

The residue at position 2 (alanine 2) is an N-acetylalanine. Residues 4 to 30 (SSTETQLQRIIRDLQDAATELSHEFKE) adopt a coiled-coil conformation. The RUN domain occupies 36–169 (TDDSTSLHKF…VQFDLAPRGY (134 aa)). Residue serine 196 is modified to Phosphoserine. Coiled coils occupy residues 223–270 (SLNN…VSRQ), 305–846 (SQAT…SEGA), and 873–1110 (ALTA…KDAL). Threonine 372 carries the phosphothreonine modification. Phosphoserine is present on serine 837. The FYVE-type zinc finger occupies 1132-1190 (DMEVNHCHDCKREFSWIVRRHHCRICGRIFCYYCCNNYVVTKPSGKKERCCRACFQKFG). Residues cysteine 1138, cysteine 1141, cysteine 1154, cysteine 1157, cysteine 1162, cysteine 1165, cysteine 1182, and cysteine 1185 each coordinate Zn(2+). 2 disordered regions span residues 1191–1227 (EGSG…SQGI) and 1253–1289 (SGSS…TEDV). The segment covering 1194-1206 (GSNDSSGSGTSQG) has biased composition (low complexity). 2 stretches are compositionally biased toward polar residues: residues 1218–1227 (SPQSIGSQGI) and 1253–1283 (SGSS…SLTP). A GOLD domain is found at 1296–1425 (EICLLKSGEL…SKKVLYHLTV (130 aa)).

Can form homodimers. Interacts (via C-terminus) with MAP1LC3B. Interacts with RAB7A; the interaction with RAB7A induces FYCO1 recruitment to late endosomal/lysosomal compartments. As to expression, expressed in heart and testis. Expressed in the eye lens.

It localises to the cytoplasmic vesicle. The protein resides in the autophagosome. Its subcellular location is the endosome. The protein localises to the lysosome. May mediate microtubule plus end-directed vesicle transport. The protein is FYVE and coiled-coil domain-containing protein 1 (Fyco1) of Mus musculus (Mouse).